The sequence spans 469 residues: Desmin (469 aa).

A head region spans residues 2–107; sequence SQAYSSSQRV…QEFLTTRTNE (106 aa). Ser7 is subject to Phosphoserine; by CDK1. Phosphoserine; by AURKB is present on Ser12. The residue at position 16 (Arg16) is an Omega-N-methylarginine. Thr17 is modified (phosphothreonine; by AURKB and ROCK1). Phosphoserine; by CDK1 occurs at positions 28 and 32. An Asymmetric dimethylarginine; alternate modification is found at Arg37. At Arg37 the chain carries Omega-N-methylarginine; alternate. Ser45 carries the phosphoserine modification. ADP-ribosylarginine is present on Arg58. Ser60 is subject to Phosphoserine; by AURKB. Residue Arg70 is modified to Omega-N-methylarginine. A Phosphothreonine; by ROCK1 modification is found at Thr76. Ser81 is subject to Phosphoserine. One can recognise an IF rod domain in the interval 107–415; it reads EKVELQELND…KLLEGEESRI (309 aa). Positions 108-140 are coil 1A; it reads KVELQELNDRFANYIEKVRFLEQQNAALAAEVN. The segment at 141–150 is linker 1; the sequence is RLKGREPTRV. The segment at 151–251 is coil 1B; sequence AEIYEEELRE…HEEEIRELQA (101 aa). The segment at 252 to 267 is linker 12; that stretch reads QLQEQQVQVEMDMSKP. The segment at 267 to 414 is interaction with NEB; that stretch reads PDLTAALRDI…RKLLEGEESR (148 aa). A coil 2A region spans residues 268–286; that stretch reads DLTAALRDIRAQYETIAAK. The tract at residues 287–294 is linker 2; the sequence is NISEAEEW. Residues Ser289, Ser357, Ser360, and Ser423 each carry the phosphoserine modification. A coil 2B region spans residues 295-411; it reads YKSKVSDLTQ…ATYRKLLEGE (117 aa). The interval 412 to 469 is tail; sequence ESRINLPIQTYSALNFRETSPEQRGSEVHTKKTVMIKTIETRDGEVVSEATQQQHEVL. Residues 437-452 form an interaction with CRYAB region; the sequence is SEVHTKKTVMIKTIET.

Belongs to the intermediate filament family. In terms of assembly, homomer. Interacts with DST. Interacts with MTM1. Interacts with EPPK1; interaction is dependent of higher-order structure of intermediate filament. Interacts with CRYAB. Interacts with NEB (via nebulin repeats 160-164). Interacts (via rod region) with NEBL (via nebulin repeats 1-5). Interacts with ASB2; the interaction targets DES for proteasomal degradation. Interacts with PKP1. Interacts with FLII. Post-translationally, ADP-ribosylation prevents ability to form intermediate filaments. Phosphorylation at Ser-7, Ser-28 and Ser-32 by CDK1, phosphorylation at Ser-60 by AURKB and phosphorylation at Thr-76 by ROCK1 contribute to efficient separation of desmin intermediate filaments during mitosis. In terms of processing, ubiquitination by a SCF-like complex containing ASB2 leads to proteasomal degradation.

It is found in the cytoplasm. Its subcellular location is the myofibril. The protein localises to the sarcomere. The protein resides in the z line. It localises to the cell membrane. It is found in the sarcolemma. Its subcellular location is the nucleus. The protein localises to the cell tip. The protein resides in the nucleus envelope. In terms of biological role, muscle-specific type III intermediate filament essential for proper muscular structure and function. Plays a crucial role in maintaining the structure of sarcomeres, inter-connecting the Z-disks and forming the myofibrils, linking them not only to the sarcolemmal cytoskeleton, but also to the nucleus and mitochondria, thus providing strength for the muscle fiber during activity. In adult striated muscle they form a fibrous network connecting myofibrils to each other and to the plasma membrane from the periphery of the Z-line structures. May act as a sarcomeric microtubule-anchoring protein: specifically associates with detyrosinated tubulin-alpha chains, leading to buckled microtubules and mechanical resistance to contraction. Required for nuclear membrane integrity, via anchoring at the cell tip and nuclear envelope, resulting in maintenance of microtubule-derived intracellular mechanical forces. Contributes to the transcriptional regulation of the NKX2-5 gene in cardiac progenitor cells during a short period of cardiomyogenesis and in cardiac side population stem cells in the adult. Plays a role in maintaining an optimal conformation of nebulette (NEB) on heart muscle sarcomeres to bind and recruit cardiac alpha-actin. This is Desmin (DES) from Canis lupus familiaris (Dog).